Here is a 994-residue protein sequence, read N- to C-terminus: NACHT, LRR and PYD domains-containing protein 4 (994 aa).

Residues 1–94 enclose the Pyrin domain; that stretch reads MAASFFSDFG…CMKVMRERTG (94 aa). The 324-residue stretch at 149–472 folds into the NACHT domain; that stretch reads RTVIIQGPQG…FYLLKSHLDH (324 aa). ATP is bound at residue 155-162; the sequence is GPQGIGKT. LRR repeat units follow at residues 637-660, 698-721, 722-745, 750-777, 806-833, 863-886, 920-943, and 949-972; these read SGHL…TWCN, YLSF…LNYP, AGNV…VLAG, NKKL…LCSP, NKSV…ALKH, NQNL…LLCR, SKTL…VLCE, and ECAL…LLTA.

This sequence belongs to the NLRP family. Interacts with CHUK/IKKA, inhibiting its kinase activity.

In terms of biological role, may be involved in inflammation and recognition of cytosolic pathogen-associated molecular patterns (PAMPs) not intercepted by membrane-bound receptors. Acts as a negative regulator of the type I interferon signaling pathway by serving as an adapter to promote DTX4-mediated ubiquitination of activated TBK1, and its subsequent degradation. Suppresses NF-kappaB induction by the cytokines TNFA and IL1B, suggesting that it operates at a point of convergence in these two cytokine signaling pathways. The chain is NACHT, LRR and PYD domains-containing protein 4 from Homo sapiens (Human).